The primary structure comprises 254 residues: MAGHSKWANIKRQKARVDAKKGQTFTQLSRAIIVATRNGVPDPAGNFQLRTAIEKAKAAGIPNDNIERAIAKGAGTWENDSAFEEIRYEGYGPGGVAILIEALTDNRNRTAAALRAAFSKNGGNLGETGCVGWMFDHKGVIRLEGTIDEDKLLEASLEGQAQSYEFFDSEEEGQGAEVFTEVSNLERLNKVLQAAGFKVKEAELRWIPTNTLEVSDREQARFLLKLIDTLESLDHVQSVTANFDLVEELMLLDL.

This sequence belongs to the TACO1 family.

Its subcellular location is the cytoplasm. This chain is Probable transcriptional regulatory protein MAE_13580, found in Microcystis aeruginosa (strain NIES-843 / IAM M-2473).